A 418-amino-acid chain; its full sequence is Bifunctional protein GlmU (418 aa).

Residues 1–236 (MAAVIVLAAG…VWQTEGVNDR (236 aa)) form a pyrophosphorylase region. UDP-N-acetyl-alpha-D-glucosamine is bound by residues 7–10 (LAAG), lysine 21, glutamine 74, 79–80 (GT), 102–104 (YGD), glycine 141, glutamate 155, asparagine 170, and asparagine 234. Position 104 (aspartate 104) interacts with Mg(2+). Residue asparagine 234 participates in Mg(2+) binding. The interval 237–257 (VQLARMNAEVNRRIVTGWMRA) is linker. An N-acetyltransferase region spans residues 258–418 (GVTIIDPTST…DDTLNPEADQ (161 aa)). Residues arginine 339 and lysine 357 each contribute to the UDP-N-acetyl-alpha-D-glucosamine site. The active-site Proton acceptor is histidine 369. Tyrosine 372 contacts UDP-N-acetyl-alpha-D-glucosamine. Alanine 386 is a binding site for acetyl-CoA.

This sequence in the N-terminal section; belongs to the N-acetylglucosamine-1-phosphate uridyltransferase family. It in the C-terminal section; belongs to the transferase hexapeptide repeat family. Homotrimer. Mg(2+) serves as cofactor.

It is found in the cytoplasm. It carries out the reaction alpha-D-glucosamine 1-phosphate + acetyl-CoA = N-acetyl-alpha-D-glucosamine 1-phosphate + CoA + H(+). The catalysed reaction is N-acetyl-alpha-D-glucosamine 1-phosphate + UTP + H(+) = UDP-N-acetyl-alpha-D-glucosamine + diphosphate. Its pathway is nucleotide-sugar biosynthesis; UDP-N-acetyl-alpha-D-glucosamine biosynthesis; N-acetyl-alpha-D-glucosamine 1-phosphate from alpha-D-glucosamine 6-phosphate (route II): step 2/2. The protein operates within nucleotide-sugar biosynthesis; UDP-N-acetyl-alpha-D-glucosamine biosynthesis; UDP-N-acetyl-alpha-D-glucosamine from N-acetyl-alpha-D-glucosamine 1-phosphate: step 1/1. It functions in the pathway bacterial outer membrane biogenesis; LPS lipid A biosynthesis. In terms of biological role, catalyzes the last two sequential reactions in the de novo biosynthetic pathway for UDP-N-acetylglucosamine (UDP-GlcNAc). The C-terminal domain catalyzes the transfer of acetyl group from acetyl coenzyme A to glucosamine-1-phosphate (GlcN-1-P) to produce N-acetylglucosamine-1-phosphate (GlcNAc-1-P), which is converted into UDP-GlcNAc by the transfer of uridine 5-monophosphate (from uridine 5-triphosphate), a reaction catalyzed by the N-terminal domain. The protein is Bifunctional protein GlmU of Cutibacterium acnes (strain DSM 16379 / KPA171202) (Propionibacterium acnes).